The primary structure comprises 508 residues: Glycerol kinase (508 aa).

Thr-14 contacts ADP. ATP is bound by residues Thr-14, Thr-15, and Ser-16. Thr-14 is a sn-glycerol 3-phosphate binding site. Arg-18 is an ADP binding site. Sn-glycerol 3-phosphate contacts are provided by Arg-84, Glu-85, and Tyr-136. Arg-84, Glu-85, and Tyr-136 together coordinate glycerol. At His-232 the chain carries Phosphohistidine; by HPr. Asp-246 lines the sn-glycerol 3-phosphate pocket. Positions 246 and 247 each coordinate glycerol. ADP is bound by residues Thr-268 and Gly-311. Residues Thr-268, Gly-311, Gln-315, and Gly-412 each coordinate ATP. Residues Gly-412 and Asn-416 each contribute to the ADP site.

Belongs to the FGGY kinase family. As to quaternary structure, homotetramer and homodimer (in equilibrium). Post-translationally, the phosphoenolpyruvate-dependent sugar phosphotransferase system (PTS), including enzyme I, and histidine-containing protein (HPr) are required for the phosphorylation, which leads to the activation of the enzyme.

The enzyme catalyses glycerol + ATP = sn-glycerol 3-phosphate + ADP + H(+). Its pathway is polyol metabolism; glycerol degradation via glycerol kinase pathway; sn-glycerol 3-phosphate from glycerol: step 1/1. Activated by phosphorylation and inhibited by fructose 1,6-bisphosphate (FBP). Its function is as follows. Key enzyme in the regulation of glycerol uptake and metabolism. Catalyzes the phosphorylation of glycerol to yield sn-glycerol 3-phosphate. This Streptococcus pyogenes serotype M28 (strain MGAS6180) protein is Glycerol kinase.